Reading from the N-terminus, the 223-residue chain is NADH-quinone oxidoreductase subunit C (223 aa).

It belongs to the complex I 30 kDa subunit family. In terms of assembly, NDH-1 is composed of 14 different subunits. Subunits NuoB, C, D, E, F, and G constitute the peripheral sector of the complex.

Its subcellular location is the cell inner membrane. It carries out the reaction a quinone + NADH + 5 H(+)(in) = a quinol + NAD(+) + 4 H(+)(out). In terms of biological role, NDH-1 shuttles electrons from NADH, via FMN and iron-sulfur (Fe-S) centers, to quinones in the respiratory chain. The immediate electron acceptor for the enzyme in this species is believed to be ubiquinone. Couples the redox reaction to proton translocation (for every two electrons transferred, four hydrogen ions are translocated across the cytoplasmic membrane), and thus conserves the redox energy in a proton gradient. This Hydrogenovibrio crunogenus (strain DSM 25203 / XCL-2) (Thiomicrospira crunogena) protein is NADH-quinone oxidoreductase subunit C.